Consider the following 371-residue polypeptide: Photosynthetic reaction center cytochrome c subunit (371 aa).

Positions 114, 127, 130, 131, 153, 167, 178, 181, 182, 267, 278, 281, 282, 339, 342, and 343 each coordinate heme.

In terms of assembly, component of the photosynthetic reaction center composed of protein subunits L (PufL), M (PufM), H (PuhA) and cytochrome C (PufC). The reaction center interacts with light-harvesting antenna complex LH1. Post-translationally, binds 4 heme groups per subunit.

Its subcellular location is the cellular chromatophore membrane. Its function is as follows. The reaction center of purple bacteria contains a tightly bound cytochrome molecule which re-reduces the photo oxidized primary electron donor. This chain is Photosynthetic reaction center cytochrome c subunit (pufC), found in Roseobacter denitrificans (strain ATCC 33942 / OCh 114) (Erythrobacter sp. (strain OCh 114)).